Here is a 571-residue protein sequence, read N- to C-terminus: Carboxylesterase 3B (571 aa).

Positions 1–31 are cleaved as a signal peptide; the sequence is MTNMRTMIPAGSSVLVWVTCLLLAFVTTVTG. The cysteines at positions 100 and 127 are disulfide-linked. The Acyl-ester intermediate role is filled by serine 232. A disulfide bond links cysteine 284 and cysteine 295. Residue asparagine 311 is glycosylated (N-linked (GlcNAc...) asparagine). Active-site charge relay system residues include glutamate 347 and histidine 460. Residues 568 to 571 carry the Prevents secretion from ER motif; that stretch reads PEEL.

The protein belongs to the type-B carboxylesterase/lipase family.

The protein localises to the endoplasmic reticulum lumen. It catalyses the reaction a carboxylic ester + H2O = an alcohol + a carboxylate + H(+). Involved in the detoxification of xenobiotics and in the activation of ester and amide prodrugs. This chain is Carboxylesterase 3B (Ces3b), found in Mus musculus (Mouse).